The following is a 134-amino-acid chain: Large ribosomal subunit protein uL22 (134 aa).

It belongs to the universal ribosomal protein uL22 family. As to quaternary structure, part of the 50S ribosomal subunit.

Functionally, this protein binds specifically to 23S rRNA; its binding is stimulated by other ribosomal proteins, e.g. L4, L17, and L20. It is important during the early stages of 50S assembly. It makes multiple contacts with different domains of the 23S rRNA in the assembled 50S subunit and ribosome. Its function is as follows. The globular domain of the protein is located near the polypeptide exit tunnel on the outside of the subunit, while an extended beta-hairpin is found that lines the wall of the exit tunnel in the center of the 70S ribosome. The polypeptide is Large ribosomal subunit protein uL22 (Rhodococcus erythropolis (strain PR4 / NBRC 100887)).